Consider the following 424-residue polypeptide: Glutamate-1-semialdehyde 2,1-aminomutase (424 aa).

Position 260 is an N6-(pyridoxal phosphate)lysine (Lys-260).

It belongs to the class-III pyridoxal-phosphate-dependent aminotransferase family. HemL subfamily. The cofactor is pyridoxal 5'-phosphate.

The protein resides in the cytoplasm. It carries out the reaction (S)-4-amino-5-oxopentanoate = 5-aminolevulinate. It participates in porphyrin-containing compound metabolism; protoporphyrin-IX biosynthesis; 5-aminolevulinate from L-glutamyl-tRNA(Glu): step 2/2. The chain is Glutamate-1-semialdehyde 2,1-aminomutase from Nitrosopumilus maritimus (strain SCM1).